The sequence spans 297 residues: Probable lipid kinase YegS-like (297 aa).

Residues 2 to 131 form the DAGKc domain; the sequence is STFPASLLIL…IDIARVNDKT (130 aa). Residues threonine 40, 66-72, and threonine 93 contribute to the ATP site; that span reads GDGTINE. Mg(2+)-binding residues include leucine 213, aspartate 216, and leucine 218. Glutamate 269 functions as the Proton acceptor in the catalytic mechanism.

This sequence belongs to the diacylglycerol/lipid kinase family. YegS lipid kinase subfamily. It depends on Mg(2+) as a cofactor. The cofactor is Ca(2+).

It localises to the cytoplasm. Probably phosphorylates lipids; the in vivo substrate is unknown. This is Probable lipid kinase YegS-like from Klebsiella pneumoniae (strain 342).